The primary structure comprises 128 residues: Infection structure-specific protein 56 (128 aa).

2 stretches are compositionally biased toward polar residues: residues 27–36 (HATYPQSQPH) and 87–101 (TSIS…DSQS). 2 disordered regions span residues 27-48 (HATY…AVPS) and 86-128 (GTSI…STSA). Basic and acidic residues predominate over residues 115–128 (KDAKKELKDPSTSA).

Functionally, general role in the development of germlings including formation of the infection structures. In Uromyces appendiculatus (Rust fungus), this protein is Infection structure-specific protein 56 (INF56).